Here is a 289-residue protein sequence, read N- to C-terminus: 3-methyl-2-oxobutanoate hydroxymethyltransferase (289 aa).

Residues 1–10 show a composition bias toward low complexity; the sequence is MSDSKSSAST. Residues 1 to 33 are disordered; the sequence is MSDSKSSASTSEDRLYGSAPSHDVPKRKTRTHH. Mg(2+)-binding residues include aspartate 70 and aspartate 109. Residues 70–71, aspartate 109, and lysine 139 contribute to the 3-methyl-2-oxobutanoate site; that span reads DS. Glutamate 141 contributes to the Mg(2+) binding site. Residue glutamate 207 is the Proton acceptor of the active site.

It belongs to the PanB family. Homodecamer; pentamer of dimers. The cofactor is Mg(2+).

It is found in the cytoplasm. The catalysed reaction is 3-methyl-2-oxobutanoate + (6R)-5,10-methylene-5,6,7,8-tetrahydrofolate + H2O = 2-dehydropantoate + (6S)-5,6,7,8-tetrahydrofolate. Its pathway is cofactor biosynthesis; (R)-pantothenate biosynthesis; (R)-pantoate from 3-methyl-2-oxobutanoate: step 1/2. Its function is as follows. Catalyzes the reversible reaction in which hydroxymethyl group from 5,10-methylenetetrahydrofolate is transferred onto alpha-ketoisovalerate to form ketopantoate. This Rhodococcus jostii (strain RHA1) protein is 3-methyl-2-oxobutanoate hydroxymethyltransferase.